The following is a 481-amino-acid chain: Matrix metalloproteinase-20 (481 aa).

Residues methionine 1–alanine 20 form the signal peptide. Residues alanine 21–asparagine 105 constitute a propeptide that is removed on maturation. Asparagine 64 carries N-linked (GlcNAc...) asparagine glycosylation. The Cysteine switch motif lies at proline 96–valine 103. Cysteine 98 is a binding site for Zn(2+). Glutamate 162, alanine 163, and aspartate 164 together coordinate Ca(2+). Histidine 174 and aspartate 176 together coordinate Zn(2+). Ca(2+) is bound by residues aspartate 181, glycine 182, arginine 184, and threonine 186. Histidine 189 provides a ligand contact to Zn(2+). Positions 195, 196, 198, and 200 each coordinate Ca(2+). Histidine 202 lines the Zn(2+) pocket. 2 residues coordinate Ca(2+): aspartate 204 and glutamate 207. Histidine 224 contacts Zn(2+). Residue glutamate 225 is part of the active site. Residues histidine 228 and histidine 234 each contribute to the Zn(2+) site. Hemopexin repeat units follow at residues proline 291–leucine 341, methionine 342–arginine 387, valine 389–valine 437, and asparagine 438–cysteine 481. Cysteine 294 and cysteine 481 are oxidised to a cystine. N-linked (GlcNAc...) asparagine glycosylation is present at asparagine 297.

The protein belongs to the peptidase M10A family. Requires Zn(2+) as cofactor. Ca(2+) serves as cofactor. Autoactivates at least at the 105-Asn-|-Tyr-106 site. As to expression, expressed in the enamel organ.

It localises to the secreted. Its subcellular location is the extracellular space. The protein localises to the extracellular matrix. Its function is as follows. Degrades amelogenin, the major protein component of the enamel matrix and two of the macromolecules characterizing the cartilage extracellular matrix: aggrecan and the cartilage oligomeric matrix protein (COMP). May play a central role in tooth enamel formation. Cleaves aggrecan at the '360-Ser-|-Phe-361' site. This is Matrix metalloproteinase-20 (MMP20) from Bos taurus (Bovine).